Here is a 204-residue protein sequence, read N- to C-terminus: Guanylate kinase (204 aa).

Positions 5–184 constitute a Guanylate kinase-like domain; that stretch reads GLLLVLSGPS…AVDHIKAIVD (180 aa). 12–19 is a binding site for ATP; the sequence is GPSGVGKG.

The protein belongs to the guanylate kinase family.

It is found in the cytoplasm. The enzyme catalyses GMP + ATP = GDP + ADP. Essential for recycling GMP and indirectly, cGMP. This chain is Guanylate kinase, found in Lactobacillus acidophilus (strain ATCC 700396 / NCK56 / N2 / NCFM).